The chain runs to 180 residues: NEDD8-conjugating enzyme ubc-12 (180 aa).

In terms of domain architecture, UBC core spans 24–180 (VRDKLLAQEL…RVREYISRYC (157 aa)). C112 functions as the Glycyl thioester intermediate in the catalytic mechanism.

Belongs to the ubiquitin-conjugating enzyme family. UBC12 subfamily.

It localises to the cytoplasm. The enzyme catalyses [E1 NEDD8-activating enzyme]-S-[NEDD8 protein]-yl-L-cysteine + [E2 NEDD8-conjugating enzyme]-L-cysteine = [E1 NEDD8-activating enzyme]-L-cysteine + [E2 NEDD8-conjugating enzyme]-S-[NEDD8-protein]-yl-L-cysteine.. It participates in protein modification; protein neddylation. Its function is as follows. Accepts the ubiquitin-like protein NEDD8 from the uba-3-ula-1 E1 complex and catalyzes its covalent attachment to other proteins. Plays a role in male tail tip morphogenesis. The protein is NEDD8-conjugating enzyme ubc-12 of Caenorhabditis elegans.